A 499-amino-acid polypeptide reads, in one-letter code: DNA-directed RNA polymerase subunit Rpo2N (499 aa).

The protein belongs to the RNA polymerase beta chain family. Part of the RNA polymerase complex.

It is found in the cytoplasm. It carries out the reaction RNA(n) + a ribonucleoside 5'-triphosphate = RNA(n+1) + diphosphate. Functionally, DNA-dependent RNA polymerase (RNAP) catalyzes the transcription of DNA into RNA using the four ribonucleoside triphosphates as substrates. The Rpo2 subunit (Rpo2N and Rpo2C in this organism) is implicated in DNA promoter recognition and in nucleotide binding. This Methanococcus vannielii (strain ATCC 35089 / DSM 1224 / JCM 13029 / OCM 148 / SB) protein is DNA-directed RNA polymerase subunit Rpo2N.